A 322-amino-acid chain; its full sequence is tRNA-dihydrouridine synthase B (322 aa).

Residues 16–18 (PMA) and glutamine 70 each bind FMN. Catalysis depends on cysteine 100, which acts as the Proton donor. FMN contacts are provided by residues lysine 139, 200–202 (NGD), and 224–225 (GR).

This sequence belongs to the Dus family. DusB subfamily. FMN is required as a cofactor.

It carries out the reaction a 5,6-dihydrouridine in tRNA + NAD(+) = a uridine in tRNA + NADH + H(+). The enzyme catalyses a 5,6-dihydrouridine in tRNA + NADP(+) = a uridine in tRNA + NADPH + H(+). Its function is as follows. Catalyzes the synthesis of 5,6-dihydrouridine (D), a modified base found in the D-loop of most tRNAs, via the reduction of the C5-C6 double bond in target uridines. This chain is tRNA-dihydrouridine synthase B, found in Shewanella oneidensis (strain ATCC 700550 / JCM 31522 / CIP 106686 / LMG 19005 / NCIMB 14063 / MR-1).